A 426-amino-acid polypeptide reads, in one-letter code: Serine--tRNA ligase (426 aa).

233-235 serves as a coordination point for L-serine; that stretch reads TAE. 264–266 contacts ATP; that stretch reads RRE. Glutamate 287 serves as a coordination point for L-serine. An ATP-binding site is contributed by 351–354; sequence EISS. Serine 386 is a binding site for L-serine.

Belongs to the class-II aminoacyl-tRNA synthetase family. Type-1 seryl-tRNA synthetase subfamily. Homodimer. The tRNA molecule binds across the dimer.

Its subcellular location is the cytoplasm. The enzyme catalyses tRNA(Ser) + L-serine + ATP = L-seryl-tRNA(Ser) + AMP + diphosphate + H(+). The catalysed reaction is tRNA(Sec) + L-serine + ATP = L-seryl-tRNA(Sec) + AMP + diphosphate + H(+). Its pathway is aminoacyl-tRNA biosynthesis; selenocysteinyl-tRNA(Sec) biosynthesis; L-seryl-tRNA(Sec) from L-serine and tRNA(Sec): step 1/1. Functionally, catalyzes the attachment of serine to tRNA(Ser). Is also able to aminoacylate tRNA(Sec) with serine, to form the misacylated tRNA L-seryl-tRNA(Sec), which will be further converted into selenocysteinyl-tRNA(Sec). The chain is Serine--tRNA ligase from Prochlorococcus marinus (strain NATL1A).